A 283-amino-acid chain; its full sequence is Small ribosomal subunit protein uS3 (283 aa).

Positions 39 to 107 constitute a KH type-2 domain; sequence VRAYLKTKLK…PVHVNIEEIR (69 aa). The disordered stretch occupies residues 209–283; it reads PSGEPPVDLT…GAVPAEKAGE (75 aa). The segment covering 217-235 has biased composition (basic and acidic residues); that stretch reads LTKEDDTKRRGPRRDDGKP. Residues 244-260 are compositionally biased toward low complexity; sequence PEGQPGAAAAPGAAPAA.

The protein belongs to the universal ribosomal protein uS3 family. As to quaternary structure, part of the 30S ribosomal subunit. Forms a tight complex with proteins S10 and S14.

In terms of biological role, binds the lower part of the 30S subunit head. Binds mRNA in the 70S ribosome, positioning it for translation. This chain is Small ribosomal subunit protein uS3, found in Herminiimonas arsenicoxydans.